The chain runs to 64 residues: MKKHEIASLSEDELKKQLVELKQRFADIRFNKIVEPPQNPMIFKNLRRDIARMKTALHRYQTQK.

The protein belongs to the universal ribosomal protein uL29 family.

The chain is Large ribosomal subunit protein uL29 from Chloroherpeton thalassium (strain ATCC 35110 / GB-78).